The following is a 109-amino-acid chain: MKALSFLFIPVLGLLVCGQSLCPIDKAISEKIQEVTTSLVPGAVRIIGLDCRSVTSRGSLVTCPSGFAVTGCTCGSACGSWDVRAETTCHCQCAGMDWTGARCCRLHIQ.

The first 18 residues, Met1–Gly18, serve as a signal peptide directing secretion. Disulfide bonds link Cys51-Cys104, Cys63-Cys103, Cys72-Cys89, Cys74-Cys91, and Cys78-Cys93.

The protein belongs to the resistin/FIZZ family. Homodimer; disulfide-linked.

The protein resides in the secreted. Functionally, hormone that seems to suppress insulin ability to stimulate glucose uptake into adipose cells. Potentially links obesity to diabetes. In Bos taurus (Bovine), this protein is Resistin (RETN).